The primary structure comprises 542 residues: Aminotriazole resistance protein (542 aa).

The Cytoplasmic portion of the chain corresponds to 1 to 108 (MGNQSLVVLT…SFGSEGNSKS (108 aa)). A helical transmembrane segment spans residues 109 to 129 (WLMASFPLVSGSFILISGRLG). At 130 to 136 (DIYGLKK) the chain is on the extracellular side. Residues 137 to 157 (MLLVGYVLVIIWSLICGITKY) traverse the membrane as a helical segment. Residues 158–172 (SGSDTFFIISRAFQG) lie on the Cytoplasmic side of the membrane. Residues 173 to 193 (LGIAFVLPNVLGIIGNIYVGG) traverse the membrane as a helical segment. Residues 194–198 (TFRKN) are Extracellular-facing. The chain crosses the membrane as a helical span at residues 199-219 (IVISFVGAMAPIGATLGCLFA). Over 220-231 (GLIGTEDPKQWP) the chain is Cytoplasmic. Residues 232-252 (WAFYAYSIAAFINFVLSIYAI) form a helical membrane-spanning segment. Residues 253 to 262 (PSTIPTNIHH) are Extracellular-facing. Residues 263-283 (FSMDWIGSVLGVIGLILLNFV) traverse the membrane as a helical segment. Over 284–295 (WNQAPISGWNQA) the chain is Cytoplasmic. Residues 296 to 316 (YIIVILIISVIFLVVFIIYEI) traverse the membrane as a helical segment. The Extracellular segment spans residues 317-333 (RFAKTPLLPRAVIKDRH). A helical membrane pass occupies residues 334-354 (MIQIMLALFFGWGSFGIFTFY). The Cytoplasmic segment spans residues 355–371 (YFQFQLNIRQYTALWAG). The chain crosses the membrane as a helical span at residues 372–392 (GTYFMFLIWGIIAALLVGFTI). Residues 393–399 (KNVSPSV) are Extracellular-facing. Residues 400 to 420 (FLFFSMVAFNVGSIMASVTPV) traverse the membrane as a helical segment. The Cytoplasmic segment spans residues 421–429 (HETYFRTQL). The helical transmembrane segment at 430 to 450 (GTMIILSFGMDLSFPASSIIF) threads the bilayer. Residues 451–505 (SDNLPMEYQGMAGSLVNTVVNYSMSLCLGMGATVETQVNSDGKHLLKGYRGAQYL) lie on the Extracellular side of the membrane. N-linked (GlcNAc...) asparagine glycosylation occurs at asparagine 471. The helical transmembrane segment at 506-526 (GIGLASLACMISGLYMVESFI) threads the bilayer. Topologically, residues 527–542 (KGRRARAAAEYDCTVA) are cytoplasmic.

This sequence belongs to the major facilitator superfamily.

The protein resides in the membrane. Its function is as follows. Putative component of the machinery responsible for pumping aminotriazole (and possibly other toxic compounds) out of the cell. Probable ATP-dependent export permease. Appears to confer resistance only to aminotriazole. The chain is Aminotriazole resistance protein (ATR1) from Saccharomyces cerevisiae (strain ATCC 204508 / S288c) (Baker's yeast).